We begin with the raw amino-acid sequence, 68 residues long: Large ribosomal subunit protein uL29 (68 aa).

Belongs to the universal ribosomal protein uL29 family.

This chain is Large ribosomal subunit protein uL29, found in Bradyrhizobium sp. (strain BTAi1 / ATCC BAA-1182).